We begin with the raw amino-acid sequence, 345 residues long: Polyprenyl transferase dpmpC (345 aa).

The next 8 membrane-spanning stretches (helical) occupy residues 24–44 (PVFA…ARLA), 60–80 (GLCF…NDWV), 101–121 (VTTF…WYLL), 183–203 (LYVY…VIGW), 220–240 (CLPL…AYSY), 261–281 (HLHL…LLFL), 286–306 (SFWL…EQLI), and 319–339 (LHKS…VELL).

Belongs to the UbiA prenyltransferase family. Mg(2+) is required as a cofactor.

It localises to the membrane. Its pathway is secondary metabolite biosynthesis; terpenoid biosynthesis. Its function is as follows. Polyprenyl transferase; part of the gene cluster that mediates the biosynthesis of diterpenoid pyrones. The first step of the pathway is the synthesis of the alpha-pyrone moiety by the polyketide synthase dpmpA via condensation of one acetyl-CoA starter unit with 3 malonyl-CoA units and 2 methylations. The alpha-pyrone is then combined with geranylgeranyl pyrophosphate (GGPP) formed by the GGPP synthase dpmpD through the action of the prenyltransferase dpmpC to yield a linear alpha-pyrone diterpenoid. Subsequent steps in the diterpenoid pyrone biosynthetic pathway involve the decalin core formation, which is initiated by the epoxidation of the C10-C11 olefin by the FAD-dependent oxidoreductase dpmpE, and is followed by a cyclization cascade catalyzed by the terpene cyclase dpmpB. The short chain dehydrogenase/reductase dpmpG then oxidizes the 8S hydroxy group to a ketone and the short chain dehydrogenase/reductase dpmpH reduces the ketone to the 8R hydroxy group to yield higginsianin B. Higginsianin B is further methylated by the methyltransferase dpmpI to produce the intermediate named FDDP B. The cytochrome P450 monooxygenase dpmpJ then oxidizes the C-26 methyl to primary alcohol, producing the final diterpenoid pyrone with a C-26 primary alcohol on the gamma-pyrone moiety named FDDP C. The polypeptide is Polyprenyl transferase dpmpC (Macrophomina phaseolina (strain MS6) (Charcoal rot fungus)).